Reading from the N-terminus, the 463-residue chain is MTNVITRFAPSPTGFLHIGSARTALFNYLFARHHNGKFLLRIEDTDKERSTKEAVEAIFSGLKWLGLDWDGEVIFQSKRNNLYKEAALRLLQEGKAYYCFTSQEEIERQRQKALENKQHFIFNSEWRDKDSSTYPTDIKPVIRLKVPREGSITIHDTLQGDVVIENSHIDDMVLLRADGTATYMLAVVVDDHDMGITHIIRGDDHLTNAARQIAIYHAFGYEVPSMTHIPLIHGADGAKLSKRHGALGVEAYKDMGYLPESLCNYLLRLGWSHGDDEIISMTQAIEWFNLDSLGKSPSKLDFAKMNSLNAHYLRMLDNDSLTSKTVEILKQNYKISEKEVSYIKQAMPSLLVRSETLLDLAKLARIYLINSPIIYEQEAKEIIENCDKDLIKQVIEGLNKIEQFDKESVQNKFKEIATHNGLKLNDIMKPVRALITGMTASPSVFEIAEILGKENILKRLKII.

The 'HIGH' region motif lies at 10-20 (PSPTGFLHIGS). A 'KMSKS' region motif is present at residues 239 to 243 (KLSKR). K242 contacts ATP.

It belongs to the class-I aminoacyl-tRNA synthetase family. Glutamate--tRNA ligase type 1 subfamily. As to quaternary structure, monomer.

The protein localises to the cytoplasm. The catalysed reaction is tRNA(Glu) + L-glutamate + ATP = L-glutamyl-tRNA(Glu) + AMP + diphosphate. Functionally, catalyzes the attachment of glutamate to tRNA(Glu) in a two-step reaction: glutamate is first activated by ATP to form Glu-AMP and then transferred to the acceptor end of tRNA(Glu). This is Glutamate--tRNA ligase 2 from Rickettsia felis (strain ATCC VR-1525 / URRWXCal2) (Rickettsia azadi).